Reading from the N-terminus, the 184-residue chain is ATP synthase subunit b, chloroplastic (184 aa).

The chain crosses the membrane as a helical span at residues 27-49 (LATNPINLSVVLGVLIFFGKGVL).

This sequence belongs to the ATPase B chain family. In terms of assembly, F-type ATPases have 2 components, F(1) - the catalytic core - and F(0) - the membrane proton channel. F(1) has five subunits: alpha(3), beta(3), gamma(1), delta(1), epsilon(1). F(0) has four main subunits: a(1), b(1), b'(1) and c(10-14). The alpha and beta chains form an alternating ring which encloses part of the gamma chain. F(1) is attached to F(0) by a central stalk formed by the gamma and epsilon chains, while a peripheral stalk is formed by the delta, b and b' chains.

It localises to the plastid. Its subcellular location is the chloroplast thylakoid membrane. Functionally, f(1)F(0) ATP synthase produces ATP from ADP in the presence of a proton or sodium gradient. F-type ATPases consist of two structural domains, F(1) containing the extramembraneous catalytic core and F(0) containing the membrane proton channel, linked together by a central stalk and a peripheral stalk. During catalysis, ATP synthesis in the catalytic domain of F(1) is coupled via a rotary mechanism of the central stalk subunits to proton translocation. Its function is as follows. Component of the F(0) channel, it forms part of the peripheral stalk, linking F(1) to F(0). The chain is ATP synthase subunit b, chloroplastic from Eucalyptus globulus subsp. globulus (Tasmanian blue gum).